Reading from the N-terminus, the 146-residue chain is Hemoglobin subunit beta (146 aa).

The Globin domain maps to 2–146; it reads QWTAEEKQLI…VAHALARKYH (145 aa). Residues H63 and H92 each contribute to the heme b site.

The protein belongs to the globin family. Heterotetramer of two alpha chains and two beta chains. In terms of tissue distribution, red blood cells.

Functionally, involved in oxygen transport from the lung to the various peripheral tissues. The protein is Hemoglobin subunit beta (HBB) of Sturnus vulgaris (Starling).